The sequence spans 307 residues: N-acetylmuramic acid 6-phosphate etherase (307 aa).

Positions 62–225 (IVLAFQKGAR…TTASMIRIGK (164 aa)) constitute an SIS domain. E90 (proton donor) is an active-site residue. Residue E121 is part of the active site.

Belongs to the GCKR-like family. MurNAc-6-P etherase subfamily. Homodimer.

It carries out the reaction N-acetyl-D-muramate 6-phosphate + H2O = N-acetyl-D-glucosamine 6-phosphate + (R)-lactate. The protein operates within amino-sugar metabolism; 1,6-anhydro-N-acetylmuramate degradation. Its pathway is amino-sugar metabolism; N-acetylmuramate degradation. It functions in the pathway cell wall biogenesis; peptidoglycan recycling. Its function is as follows. Specifically catalyzes the cleavage of the D-lactyl ether substituent of MurNAc 6-phosphate, producing GlcNAc 6-phosphate and D-lactate. Together with AnmK, is also required for the utilization of anhydro-N-acetylmuramic acid (anhMurNAc) either imported from the medium or derived from its own cell wall murein, and thus plays a role in cell wall recycling. The sequence is that of N-acetylmuramic acid 6-phosphate etherase from Mesorhizobium japonicum (strain LMG 29417 / CECT 9101 / MAFF 303099) (Mesorhizobium loti (strain MAFF 303099)).